The following is a 459-amino-acid chain: Bifunctional protein GlmU (459 aa).

The segment at 1–229 (MSNYAIILAA…FDESLGVNDR (229 aa)) is pyrophosphorylase. UDP-N-acetyl-alpha-D-glucosamine contacts are provided by residues 8–11 (LAAG), Lys22, Gln72, and 77–78 (GT). Asp102 serves as a coordination point for Mg(2+). Residues Gly139, Glu154, Asn169, and Asn227 each contribute to the UDP-N-acetyl-alpha-D-glucosamine site. Position 227 (Asn227) interacts with Mg(2+). Residues 230-250 (VALATAEKVMRHRIARQHMVN) are linker. The segment at 251-459 (GVTVVNPDSA…NKKPHHPSQK (209 aa)) is N-acetyltransferase. UDP-N-acetyl-alpha-D-glucosamine is bound by residues Arg332 and Lys350. The Proton acceptor role is filled by His362. Tyr365 and Asn376 together coordinate UDP-N-acetyl-alpha-D-glucosamine. Residues Ala379, 385–386 (NY), Ser404, Ala422, and Arg439 each bind acetyl-CoA.

This sequence in the N-terminal section; belongs to the N-acetylglucosamine-1-phosphate uridyltransferase family. It in the C-terminal section; belongs to the transferase hexapeptide repeat family. Homotrimer. Mg(2+) serves as cofactor.

Its subcellular location is the cytoplasm. It carries out the reaction alpha-D-glucosamine 1-phosphate + acetyl-CoA = N-acetyl-alpha-D-glucosamine 1-phosphate + CoA + H(+). The catalysed reaction is N-acetyl-alpha-D-glucosamine 1-phosphate + UTP + H(+) = UDP-N-acetyl-alpha-D-glucosamine + diphosphate. It participates in nucleotide-sugar biosynthesis; UDP-N-acetyl-alpha-D-glucosamine biosynthesis; N-acetyl-alpha-D-glucosamine 1-phosphate from alpha-D-glucosamine 6-phosphate (route II): step 2/2. The protein operates within nucleotide-sugar biosynthesis; UDP-N-acetyl-alpha-D-glucosamine biosynthesis; UDP-N-acetyl-alpha-D-glucosamine from N-acetyl-alpha-D-glucosamine 1-phosphate: step 1/1. It functions in the pathway bacterial outer membrane biogenesis; LPS lipid A biosynthesis. In terms of biological role, catalyzes the last two sequential reactions in the de novo biosynthetic pathway for UDP-N-acetylglucosamine (UDP-GlcNAc). The C-terminal domain catalyzes the transfer of acetyl group from acetyl coenzyme A to glucosamine-1-phosphate (GlcN-1-P) to produce N-acetylglucosamine-1-phosphate (GlcNAc-1-P), which is converted into UDP-GlcNAc by the transfer of uridine 5-monophosphate (from uridine 5-triphosphate), a reaction catalyzed by the N-terminal domain. The polypeptide is Bifunctional protein GlmU (Streptococcus agalactiae serotype III (strain NEM316)).